The primary structure comprises 276 residues: UPF0276 protein CV_3513 (276 aa).

It belongs to the UPF0276 family.

This is UPF0276 protein CV_3513 from Chromobacterium violaceum (strain ATCC 12472 / DSM 30191 / JCM 1249 / CCUG 213 / NBRC 12614 / NCIMB 9131 / NCTC 9757 / MK).